The sequence spans 310 residues: Upstream stimulatory factor 1 (310 aa).

The span at 1 to 17 (MKGQQKTAETEEGTVQI) shows a compositional bias: polar residues. 2 disordered regions span residues 1–26 (MKGQ…ATGE) and 171–209 (QGGS…EVER). The span at 194–209 (TTRDEKRRAQHNEVER) shows a compositional bias: basic and acidic residues. A bHLH domain is found at 199-254 (KRRAQHNEVERRRRDKINNWIVQLSKIIPDCSMESTKSGQSKGGILSKACDYIQEL). A leucine-zipper region spans residues 271–292 (LQLDNDVLRQQVEDLKNKNLLL). Lysine 306 is covalently cross-linked (Glycyl lysine isopeptide (Lys-Gly) (interchain with G-Cter in SUMO2)).

As to quaternary structure, efficient DNA binding requires dimerization with another bHLH protein. Binds DNA as a homodimer or a heterodimer (USF1/USF2).

The protein localises to the nucleus. Transcription factor that binds to a symmetrical DNA sequence (E-boxes) (5'-CACGTG-3') that is found in a variety of viral and cellular promoters. Regulates the expression of the surfactant protein-A (SP-A) gene. This Oryctolagus cuniculus (Rabbit) protein is Upstream stimulatory factor 1 (USF1).